The sequence spans 434 residues: Enolase (434 aa).

Residue glutamine 166 coordinates (2R)-2-phosphoglycerate. The Proton donor role is filled by glutamate 208. Residues aspartate 245, glutamate 290, and aspartate 317 each coordinate Mg(2+). Residues lysine 342, arginine 371, serine 372, and lysine 393 each coordinate (2R)-2-phosphoglycerate. Lysine 342 (proton acceptor) is an active-site residue.

It belongs to the enolase family. Mg(2+) is required as a cofactor.

It localises to the cytoplasm. The protein resides in the secreted. The protein localises to the cell surface. The catalysed reaction is (2R)-2-phosphoglycerate = phosphoenolpyruvate + H2O. It participates in carbohydrate degradation; glycolysis; pyruvate from D-glyceraldehyde 3-phosphate: step 4/5. Functionally, catalyzes the reversible conversion of 2-phosphoglycerate (2-PG) into phosphoenolpyruvate (PEP). It is essential for the degradation of carbohydrates via glycolysis. The chain is Enolase from Caldicellulosiruptor saccharolyticus (strain ATCC 43494 / DSM 8903 / Tp8T 6331).